The primary structure comprises 475 residues: Ribulose bisphosphate carboxylase large chain (475 aa).

The propeptide occupies 1–2 (MS). P3 is subject to N-acetylproline. The residue at position 14 (K14) is an N6,N6,N6-trimethyllysine. Positions 123 and 173 each coordinate substrate. K175 functions as the Proton acceptor in the catalytic mechanism. Residue K177 coordinates substrate. Mg(2+)-binding residues include K201, D203, and E204. K201 carries the post-translational modification N6-carboxylysine. The Proton acceptor role is filled by H294. Residues R295, H327, and S379 each contribute to the substrate site.

Belongs to the RuBisCO large chain family. Type I subfamily. Heterohexadecamer of 8 large chains and 8 small chains; disulfide-linked. The disulfide link is formed within the large subunit homodimers. Requires Mg(2+) as cofactor. Post-translationally, the disulfide bond which can form in the large chain dimeric partners within the hexadecamer appears to be associated with oxidative stress and protein turnover.

It is found in the plastid. The protein resides in the chloroplast. It carries out the reaction 2 (2R)-3-phosphoglycerate + 2 H(+) = D-ribulose 1,5-bisphosphate + CO2 + H2O. The catalysed reaction is D-ribulose 1,5-bisphosphate + O2 = 2-phosphoglycolate + (2R)-3-phosphoglycerate + 2 H(+). In terms of biological role, ruBisCO catalyzes two reactions: the carboxylation of D-ribulose 1,5-bisphosphate, the primary event in carbon dioxide fixation, as well as the oxidative fragmentation of the pentose substrate in the photorespiration process. Both reactions occur simultaneously and in competition at the same active site. The protein is Ribulose bisphosphate carboxylase large chain of Angiopteris evecta (Mule's foot fern).